The following is a 341-amino-acid chain: MNLGDLTNFVEKPLAAVSNIVNTPNSAGRYRPFYLRNLLDAVQGRNLNDAVKGKVVLITGGSSGIGAAAAKKIAEAGGTVVLVARTLENLENVANDIRAIRGNGGTAHVYPCDLSDMDAIAVMADQVLGDLGGVDILINNAGRSIRRSLELSYDRIHDYQRTMQLNYLGAVQLILKFIPGMRERHFGHIVNVSSVGVQTRAPRFGAYIASKAALDSLCDALQAETVHDNVRFTTVHMALVRTPMISPTTIYDKFPTLTPDQAAGVITDAIVHRPRRASSPFGQFAAVADAVNPAVMDRVRNRAFNMFGDSSAAKGSESQTDTSELDKRSETFVRATRGIHW.

Residue 58 to 82 coordinates NADP(+); it reads ITGGSSGIGAAAAKKIAEAGGTVVL. Serine 194 is a binding site for substrate. The Proton acceptor role is filled by tyrosine 207. Positions 309 to 329 are disordered; it reads DSSAAKGSESQTDTSELDKRS.

The protein belongs to the short-chain dehydrogenases/reductases (SDR) family.

This is an uncharacterized protein from Mycobacterium bovis (strain ATCC BAA-935 / AF2122/97).